The sequence spans 332 residues: UPF0194 membrane protein YbhG (332 aa).

A signal peptide spans methionine 1–tyrosine 26. Positions glutamate 108–alanine 209 form a coiled coil.

The protein belongs to the UPF0194 family.

It is found in the periplasm. The sequence is that of UPF0194 membrane protein YbhG (ybhG) from Shigella sonnei (strain Ss046).